Here is a 459-residue protein sequence, read N- to C-terminus: Exodeoxyribonuclease 7 large subunit (459 aa).

Belongs to the XseA family. Heterooligomer composed of large and small subunits.

The protein resides in the cytoplasm. The enzyme catalyses Exonucleolytic cleavage in either 5'- to 3'- or 3'- to 5'-direction to yield nucleoside 5'-phosphates.. Bidirectionally degrades single-stranded DNA into large acid-insoluble oligonucleotides, which are then degraded further into small acid-soluble oligonucleotides. This Pseudomonas fluorescens (strain Pf0-1) protein is Exodeoxyribonuclease 7 large subunit.